We begin with the raw amino-acid sequence, 356 residues long: S-adenosylmethionine:tRNA ribosyltransferase-isomerase (356 aa).

Belongs to the QueA family. In terms of assembly, monomer.

The protein localises to the cytoplasm. The enzyme catalyses 7-aminomethyl-7-carbaguanosine(34) in tRNA + S-adenosyl-L-methionine = epoxyqueuosine(34) in tRNA + adenine + L-methionine + 2 H(+). It functions in the pathway tRNA modification; tRNA-queuosine biosynthesis. In terms of biological role, transfers and isomerizes the ribose moiety from AdoMet to the 7-aminomethyl group of 7-deazaguanine (preQ1-tRNA) to give epoxyqueuosine (oQ-tRNA). The sequence is that of S-adenosylmethionine:tRNA ribosyltransferase-isomerase from Escherichia coli O1:K1 / APEC.